The following is a 61-amino-acid chain: Large ribosomal subunit protein uL30 (61 aa).

Belongs to the universal ribosomal protein uL30 family. Part of the 50S ribosomal subunit.

The chain is Large ribosomal subunit protein uL30 from Shewanella piezotolerans (strain WP3 / JCM 13877).